The primary structure comprises 92 residues: Acylphosphatase (92 aa).

The Acylphosphatase-like domain maps to 5 to 92 (RAHVFISGRV…GKEGIFTIVW (88 aa)). Catalysis depends on residues arginine 20 and asparagine 38.

The protein belongs to the acylphosphatase family.

It catalyses the reaction an acyl phosphate + H2O = a carboxylate + phosphate + H(+). The protein is Acylphosphatase (acyP) of Chloroflexus aurantiacus (strain ATCC 29366 / DSM 635 / J-10-fl).